The following is a 464-amino-acid chain: Protein FAM90A18 (464 aa).

Disordered stretches follow at residues 1-42 (MMAR…DPRL), 70-387 (PATL…ASHD), and 415-437 (HSPE…SEAP). 2 stretches are compositionally biased toward basic and acidic residues: residues 74–89 (GKKE…KPRV) and 97–114 (NKDK…DPQR). Positions 180 to 197 (LASLSPLRKASLSSSSSL) are enriched in low complexity.

This sequence belongs to the FAM90 family.

The polypeptide is Protein FAM90A18 (Homo sapiens (Human)).